A 122-amino-acid polypeptide reads, in one-letter code: Large ribosomal subunit protein uL14 (122 aa).

The protein belongs to the universal ribosomal protein uL14 family. In terms of assembly, part of the 50S ribosomal subunit. Forms a cluster with proteins L3 and L19. In the 70S ribosome, L14 and L19 interact and together make contacts with the 16S rRNA in bridges B5 and B8.

Binds to 23S rRNA. Forms part of two intersubunit bridges in the 70S ribosome. The chain is Large ribosomal subunit protein uL14 from Borreliella burgdorferi (strain ATCC 35210 / DSM 4680 / CIP 102532 / B31) (Borrelia burgdorferi).